Here is a 380-residue protein sequence, read N- to C-terminus: MAPTMRKSHPLLKIINGSFIDLPTPANISAWWNFGWLLGVCVIVQIATGLFLAMHYTADTSLAFSSIAHICRDVNNGWLLRNLHANGASFFFICIYFHIGRGLYYGSYLYKETWNIGVILLFLVMATAFVGYVLPWGQMSFWGATVITNLLSAAPYIGPDLVQWIWGGFSVDNATLTRFFTFHFILPFIIAAMSMIHLLFLHQTGSSNPTGLNSNLDKVSFHPYFSFKDLLGFIILLGALAILSTFAPNLLGDPDNFTPANPLVTPPHIKPEWYFLFAYAILRSIPNKLGGVLALLLSIMVLFLMPIIHTSKLRSLMFRPAAKAFFWALIANTIILTWIGGQPVEDPFISIGQIASGLYFLIFVLIIPTLGLLENKLLKI.

4 consecutive transmembrane segments (helical) span residues 34-54, 78-99, 114-134, and 179-199; these read FGWLLGVCVIVQIATGLFLAM, WLLRNLHANGASFFFICIYFHI, WNIGVILLFLVMATAFVGYVL, and FFTFHFILPFIIAAMSMIHLL. Heme b-binding residues include His-84 and His-98. Heme b is bound by residues His-183 and His-197. His-202 provides a ligand contact to a ubiquinone. The next 4 membrane-spanning stretches (helical) occupy residues 227 to 247, 289 to 309, 321 to 341, and 348 to 368; these read FKDLLGFIILLGALAILSTFA, LGGVLALLLSIMVLFLMPIIH, AAKAFFWALIANTIILTWIGG, and FISIGQIASGLYFLIFVLIIP.

The protein belongs to the cytochrome b family. The cytochrome bc1 complex contains 3 respiratory subunits (MT-CYB, CYC1 and UQCRFS1), 2 core proteins (UQCRC1 and UQCRC2) and probably 6 low-molecular weight proteins. Heme b is required as a cofactor.

Its subcellular location is the mitochondrion inner membrane. In terms of biological role, component of the ubiquinol-cytochrome c reductase complex (complex III or cytochrome b-c1 complex) that is part of the mitochondrial respiratory chain. The b-c1 complex mediates electron transfer from ubiquinol to cytochrome c. Contributes to the generation of a proton gradient across the mitochondrial membrane that is then used for ATP synthesis. The sequence is that of Cytochrome b (mt-cyb) from Rana dybowskii (Dybovsky's frog).